The sequence spans 783 residues: BMP/retinoic acid-inducible neural-specific protein 2 (783 aa).

Positions 1-33 (MRWQCGTRFRGLRPVVAPWTALLALGLPGWVLA) are cleaved as a signal peptide. Positions 85–281 (RYRIYREFAR…FVAAALSYIT (197 aa)) constitute an MACPF domain. N-linked (GlcNAc...) asparagine glycosylation is found at Asn185, Asn354, Asn473, Asn579, Asn626, and Asn658.

Belongs to the BRINP family.

The protein localises to the secreted. Functionally, inhibits neuronal cell proliferation by negative regulation of the cell cycle transition. This chain is BMP/retinoic acid-inducible neural-specific protein 2 (BRINP2), found in Pongo abelii (Sumatran orangutan).